Consider the following 177-residue polypeptide: Large ribosomal subunit protein uL6 (177 aa).

It belongs to the universal ribosomal protein uL6 family. Part of the 50S ribosomal subunit.

In terms of biological role, this protein binds to the 23S rRNA, and is important in its secondary structure. It is located near the subunit interface in the base of the L7/L12 stalk, and near the tRNA binding site of the peptidyltransferase center. This Ruegeria pomeroyi (strain ATCC 700808 / DSM 15171 / DSS-3) (Silicibacter pomeroyi) protein is Large ribosomal subunit protein uL6.